Consider the following 480-residue polypeptide: MTTDSSPAPVRELLSVAMVTLGCARNEVDSEELAGRLEADGFRLVQDPAEADTVVVNTCGFVEAAKKDSVDTLLQAADLKARSEQGQGRTRAVVAVGCLAERYGKDLAASLPEADAVFGFDDYPDIAARLRSIVAGEAHEAHTPHDRRTLLPITPVERVLSTTPVPGHASGPASVRRRLDDGPTAALKLASGCDRRCSFCAIPAFRGSFLSRRPSDVLQEARWLADHGARELFLVSENSTSYGKDLGDLRLLETLLPELAAVDGVERVRVSYLQPAETRAGLIEAIASTPGVAPYFDLSFQHASAPVLRRMRRFGDPESFLALLAQVRGHAPAAGVRSNVIVGFPGETEQDLETLCDFLVAARLDVTGVFGYSDEDGTEAATYDGKLDDDEIRARVEHVSDLVEELTSQRAAERLGEQVEVLVERVEDGPGGRTVEGRAAHQGPEVDGATYLLDSDARVGDLVRAVVVGSEGADLDARPL.

The MTTase N-terminal domain maps to 14 to 135 (LSVAMVTLGC…IAARLRSIVA (122 aa)). Positions 23, 59, 98, 193, 197, and 200 each coordinate [4Fe-4S] cluster. One can recognise a Radical SAM core domain in the interval 179 to 410 (LDDGPTAALK…DLVEELTSQR (232 aa)). The 69-residue stretch at 412–480 (AERLGEQVEV…EGADLDARPL (69 aa)) folds into the TRAM domain.

It belongs to the methylthiotransferase family. RimO subfamily. Requires [4Fe-4S] cluster as cofactor.

The protein resides in the cytoplasm. It carries out the reaction L-aspartate(89)-[ribosomal protein uS12]-hydrogen + (sulfur carrier)-SH + AH2 + 2 S-adenosyl-L-methionine = 3-methylsulfanyl-L-aspartate(89)-[ribosomal protein uS12]-hydrogen + (sulfur carrier)-H + 5'-deoxyadenosine + L-methionine + A + S-adenosyl-L-homocysteine + 2 H(+). In terms of biological role, catalyzes the methylthiolation of an aspartic acid residue of ribosomal protein uS12. This chain is Ribosomal protein uS12 methylthiotransferase RimO, found in Nocardioides sp. (strain ATCC BAA-499 / JS614).